The following is a 163-amino-acid chain: MAEQDSNPVFQIQRVYLKDVSLEQPNSPQILLEQSQPQVDISLAVNAETVADGIYEVSVTATVTTKVADKTLFLCEAKQAGIFEIRNLPDGQTQPVLGIACPGIVYPYLRATVADIITRAGFPPVHLAEVNFQAMYEAQQQAAAQQQGAVSNGNGGSPIITNA.

The protein belongs to the SecB family. As to quaternary structure, homotetramer, a dimer of dimers. One homotetramer interacts with 1 SecA dimer.

It localises to the cytoplasm. Its function is as follows. One of the proteins required for the normal export of preproteins out of the cell cytoplasm. It is a molecular chaperone that binds to a subset of precursor proteins, maintaining them in a translocation-competent state. It also specifically binds to its receptor SecA. The chain is Protein-export protein SecB from Methylibium petroleiphilum (strain ATCC BAA-1232 / LMG 22953 / PM1).